A 421-amino-acid polypeptide reads, in one-letter code: Leucine-rich repeat-containing protein 42 (421 aa).

LRR repeat units lie at residues 149-170 (VLCS…EEIK), 174-195 (ELTR…LEHL), 202-222 (SVTQ…RKMT), 234-255 (NLTL…GYLF), and 259-280 (KLNC…KDKL). A disordered region spans residues 374–406 (HEPLLSQESKKSKKRAFEESEQEQSSPQSAKQK). Residue S399 is modified to Phosphoserine.

Belongs to the LRRC42 family.

This Rattus norvegicus (Rat) protein is Leucine-rich repeat-containing protein 42 (Lrrc42).